Consider the following 134-residue polypeptide: Small ribosomal subunit protein uS8 (134 aa).

The protein belongs to the universal ribosomal protein uS8 family. In terms of assembly, part of the 30S ribosomal subunit. Contacts proteins S5 and S12.

In terms of biological role, one of the primary rRNA binding proteins, it binds directly to 16S rRNA central domain where it helps coordinate assembly of the platform of the 30S subunit. This chain is Small ribosomal subunit protein uS8, found in Synechococcus sp. (strain JA-3-3Ab) (Cyanobacteria bacterium Yellowstone A-Prime).